A 175-amino-acid chain; its full sequence is Archaemetzincin (175 aa).

Position 125 (H125) interacts with Zn(2+). Catalysis depends on E126, which acts as the Proton acceptor. H129, H135, C136, C141, C160, and C163 together coordinate Zn(2+).

It belongs to the peptidase M54 family. In terms of assembly, monomer. Requires Zn(2+) as cofactor.

Functionally, probable zinc metalloprotease whose natural substrate is unknown. Does not show endo- or exopeptidase activity against resorufin labeled casein, p-nitroanilide (pNA), amidomethylcoumarin (AMC) (one to three amino acids in length), and hippuryl-aminoacid substrates. This Methanopyrus kandleri (strain AV19 / DSM 6324 / JCM 9639 / NBRC 100938) protein is Archaemetzincin.